A 357-amino-acid chain; its full sequence is Peptide chain release factor 1 (357 aa).

An N5-methylglutamine modification is found at Gln-234.

The protein belongs to the prokaryotic/mitochondrial release factor family. In terms of processing, methylated by PrmC. Methylation increases the termination efficiency of RF1.

The protein localises to the cytoplasm. Functionally, peptide chain release factor 1 directs the termination of translation in response to the peptide chain termination codons UAG and UAA. This Lactococcus lactis subsp. lactis (strain IL1403) (Streptococcus lactis) protein is Peptide chain release factor 1 (prfA).